A 513-amino-acid polypeptide reads, in one-letter code: Putative ribose/galactose/methyl galactoside import ATP-binding protein 2 (513 aa).

ABC transporter domains are found at residues 24–260 and 270–510; these read LSAE…VGRE and VPIG…VMEL. 56–63 is a binding site for ATP; it reads GENGAGKS.

This sequence belongs to the ABC transporter superfamily. Carbohydrate importer 2 (CUT2) (TC 3.A.1.2) family.

The protein localises to the cell inner membrane. The catalysed reaction is D-ribose(out) + ATP + H2O = D-ribose(in) + ADP + phosphate + H(+). The enzyme catalyses D-galactose(out) + ATP + H2O = D-galactose(in) + ADP + phosphate + H(+). Its function is as follows. Part of an ABC transporter complex involved in carbohydrate import. Could be involved in ribose, galactose and/or methyl galactoside import. Responsible for energy coupling to the transport system. This Rhizobium etli (strain ATCC 51251 / DSM 11541 / JCM 21823 / NBRC 15573 / CFN 42) protein is Putative ribose/galactose/methyl galactoside import ATP-binding protein 2.